The chain runs to 142 residues: Hemoglobin subunit alpha (142 aa).

In terms of domain architecture, Globin spans 2–142; it reads VLSAADKTNV…VSTVLTSKYR (141 aa). Ser4 carries the post-translational modification Phosphoserine. Lys8 bears the N6-succinyllysine mark. At Thr9 the chain carries Phosphothreonine. An N6-succinyllysine modification is found at Lys12. Lys17 carries the post-translational modification N6-acetyllysine; alternate. Lys17 bears the N6-succinyllysine; alternate mark. Tyr25 is modified (phosphotyrosine). Lys41 is modified (N6-succinyllysine). A Phosphoserine modification is found at Ser50. Position 59 (His59) interacts with O2. His88 contacts heme b. Ser103 is subject to Phosphoserine. Thr109 is modified (phosphothreonine). A phosphoserine mark is found at Ser125 and Ser132. 2 positions are modified to phosphothreonine: Thr135 and Thr138. Phosphoserine is present on Ser139.

Belongs to the globin family. As to quaternary structure, heterotetramer of two alpha chains and two beta chains. In terms of tissue distribution, red blood cells.

In terms of biological role, involved in oxygen transport from the lung to the various peripheral tissues. Its function is as follows. Hemopressin acts as an antagonist peptide of the cannabinoid receptor CNR1. Hemopressin-binding efficiently blocks cannabinoid receptor CNR1 and subsequent signaling. This is Hemoglobin subunit alpha (HBA) from Equus caballus (Horse).